The following is a 709-amino-acid chain: G1/S-specific cyclin-E (709 aa).

Disordered regions lie at residues 1–30 (MGLNAKSVCSTSSTEPNGSIVTTAPSNGEV), 43–149 (ISSS…NLSS), 162–205 (VDGQ…GSKQ), 221–289 (TVVT…PKHQ), and 642–709 (ALRA…RSNP). 3 stretches are compositionally biased toward polar residues: residues 7–29 (SVCSTSSTEPNGSIVTTAPSNGE), 61–70 (PSTSFSSASQ), and 91–106 (CDSQNLAASTAATSNG). Phosphoserine is present on residues S114, S115, S117, and S129. Over residues 162–175 (VDGQSTQELLSIRS) the composition is skewed to polar residues. Phosphoserine is present on residues S187, S192, S195, and S198. Positions 187-199 (SPLPDSPDSPPSP) are enriched in pro residues. The span at 228–258 (EDDDLLDDSCEDYSYDEDDEDDVEEEDDDVE) shows a compositional bias: acidic residues. Polar residues predominate over residues 260–277 (YSSTISPASSGCSQQQAV). T651 is subject to Phosphothreonine. The segment covering 677–709 (SSTTTCCNTAASNKGGKSSSNNSVTSCSSRSNP) has biased composition (low complexity).

The protein belongs to the cyclin family. Cyclin E subfamily. In terms of assembly, interacts with a member of the CDK2/CDK protein kinases to form a serine/threonine kinase holoenzyme complex. The cyclin subunit imparts substrate specificity to the complex. Interacts (via C-terminus) with Z600 (via C-terminus). Isoform II is ubiquitous in early embryos and, prior to mitosis 14, is rapidly degraded in all cells except the pole (germ) cells. Expressed during G1 phase in proliferating peripheral nervous system cells. Constitutive expression in embryonic cycles lacking a G1 phase.

The protein localises to the nucleus. Functionally, essential for the control of the cell cycle at the G1/S (start) transition. Targeted by archipelago for degradation by the SFC ubiquitin ligase complex. The protein is G1/S-specific cyclin-E (CycE) of Drosophila melanogaster (Fruit fly).